Consider the following 219-residue polypeptide: Large ribosomal subunit protein bL25 (219 aa).

Positions 176 to 219 are disordered; it reads VTVVPPTDEPSEEEVEAMEGESATEEPEVVGEDKEDDEEENKED. The segment covering 184–219 has biased composition (acidic residues); that stretch reads EPSEEEVEAMEGESATEEPEVVGEDKEDDEEENKED.

The protein belongs to the bacterial ribosomal protein bL25 family. CTC subfamily. In terms of assembly, part of the 50S ribosomal subunit; part of the 5S rRNA/L5/L18/L25 subcomplex. Contacts the 5S rRNA. Binds to the 5S rRNA independently of L5 and L18.

In terms of biological role, this is one of the proteins that binds to the 5S RNA in the ribosome where it forms part of the central protuberance. The sequence is that of Large ribosomal subunit protein bL25 from Staphylococcus epidermidis (strain ATCC 35984 / DSM 28319 / BCRC 17069 / CCUG 31568 / BM 3577 / RP62A).